A 1647-amino-acid chain; its full sequence is MSVQAYTNTPNLPNLIHSESITNSPVFIPNLRSKSDNKHRLNTSEELPFTKKRRATKHFLKMEVSAKISEPPSSKSVEFGRHLNMRHDFSELLEQPLTTSKTRVFKSFNEKLKGKPQLVKSDKGVLPLNKQSDILNSYERVLSNASVDSALDKKAEVDIIPFDKSVMEPKNITFNDKSGLTKFGNSNSYETTYSDSSNYHTSTDSSQYNDQDDHVYDDTNDGTDDDINNNEYKDDESSSGSESYERDEDVDEEEEEDDDENNDEGDDEDENENDELRSENGSPNPSAAVINEQENMNMSGIEEYDETNLLNELGRIRRGNQFQSLASSILSSGNLENSDDEDVSLGPQTYRFNSSFHPFRSAFSAPGVQFGRLLEGIKDFSDPTVQMLSLQELSEAFAMSTEDMLVGLFSTDSYIAAFSEILSGRNYDFGEVSIQLMLSCTTCVSNMMEALPLCMAKIAYSPIVRILCERMFDMQYIDIAEQALGVLERLSKDFGICILEHRGMLAALQYFDFFYTTVQRTAISLAANCCKFLDESNASAAEEIIPLLSNILQSSDTIVVSKAYSCLETIIESLKTSPNIIETIISEDLITTIVNALTNSTSQNKSMHLQVQLLHIISSLCQSSSALILPFLNHNLPDVMYEMLCGIPPSDTSHQADMITMQSLYYCPIELIENLLRAITSLLPKNTSNLSDEFNTKLYRLNSILLTVVMDIYFIVPLHDIRSLAVTTALKMLCSIRENNLDGLVCSLPLSSFIASILNSRKSDNFLKRDALEMCLFLLEALPNVYSSLFIREGVVQEVGFLVRSTNADMKKIKLSISFSQNKSAARHEELKNLSTLKSLAKEFLSNYKEENLENSTLVQLKQLSKHLLSETKQDESFSELAKIFQEGSNITSHELLHSGLIHNLLLSLKKFGSSSLRTFLLAMNTCDEREVLEFGNGPLVSLIFCLQNLLSTVENFQLSTLPPDTENAVDHVFSRQFKLRLMALPGSRIRPPFRSLVVSINGLATIRTLDNYLHSRISVRNETGRRFSILREAGSLRESMSGSSRNSSGDYTDSMSQDAPNHTTEPSERRDSSTSSHFEEHFVFSLMGKKVPRNKTIFRILYEYIQLSDDHTLDDFWKTPVPIFYGEPDCIHNDMKGELNYENETEGFSINIREILDLLSILYYGIRDVHTLFPDKHFRGNIENILTDFSNWKLSAKLNRQLEEQQLVVHGCLPSWCISLTSAYPFLVPFETRYLLLQSTAFGLSRSVSFLLSRNPELSKNESSSILQFVSLHRQKIRISRKKIFNYALHLLATYAASENILEIEYEDEVGSGLGPTLEFYTSVSKEFTLNSLDIWRNDQPNSKFVYQASGLFPSPIPLLGSSPENERKISLFFALGQFVARSIYDSRIISIQFNPLFFARNIPLTISSVAKVDKGLANSLRYLEKLIPGKNPTNAETDIKLEDLHLDFTLPGFPSIELIPDGASTPVTTFNVSDYLNYVIDYTVGKGVQQQLEAFQNGFSSVFPYTSLQVLTEHELVTLFGTVDEDWSYATLMKSIVADHGYTMESPTIQRLLTLMSQMNFQEQRDFLQFITGSRKLPIGGFAGLNPPLTVVRRLNEPPYVPDDYLPSVMTCVNYLKLPEYSSSEVLGSRLSKAILEGQGSFHLS.

Over residues 192–209 (TYSDSSNYHTSTDSSQYN) the composition is skewed to polar residues. Disordered regions lie at residues 192-288 (TYSD…PSAA) and 1039-1076 (ESMS…SSTS). 2 stretches are compositionally biased toward acidic residues: residues 218–228 (DTNDGTDDDIN) and 245–273 (ERDE…ENEN). Residues 1039–1050 (ESMSGSSRNSSG) show a composition bias toward low complexity. Residues 1051-1065 (DYTDSMSQDAPNHTT) show a composition bias toward polar residues. Basic and acidic residues predominate over residues 1066–1076 (EPSERRDSSTS). The K-box stretch occupies residues 1183 to 1257 (IENILTDFSN…SVSFLLSRNP (75 aa)). The region spanning 1294–1647 (ATYAASENIL…LEGQGSFHLS (354 aa)) is the HECT domain. The Glycyl thioester intermediate role is filled by Cys1614.

Belongs to the UPL family. K-HECT subfamily.

The enzyme catalyses S-ubiquitinyl-[E2 ubiquitin-conjugating enzyme]-L-cysteine + [acceptor protein]-L-lysine = [E2 ubiquitin-conjugating enzyme]-L-cysteine + N(6)-ubiquitinyl-[acceptor protein]-L-lysine.. Functionally, E3 ubiquitin-protein ligase which accepts ubiquitin from an E2 ubiquitin-conjugating enzyme in the form of a thioester and then directly transfers the ubiquitin to targeted substrates. This Schizosaccharomyces pombe (strain 972 / ATCC 24843) (Fission yeast) protein is Probable ubiquitin fusion degradation protein C12B10.01c.